The following is a 70-amino-acid chain: DNA gyrase inhibitor YacG (70 aa).

The Zn(2+) site is built by Cys-21, Cys-24, Cys-36, and Cys-40.

Belongs to the DNA gyrase inhibitor YacG family. As to quaternary structure, interacts with GyrB. Zn(2+) serves as cofactor.

In terms of biological role, inhibits all the catalytic activities of DNA gyrase by preventing its interaction with DNA. Acts by binding directly to the C-terminal domain of GyrB, which probably disrupts DNA binding by the gyrase. In Rhizobium meliloti (strain 1021) (Ensifer meliloti), this protein is DNA gyrase inhibitor YacG.